Consider the following 1159-residue polypeptide: ATP-dependent helicase/deoxyribonuclease subunit B (1159 aa).

Residues 1–401 (MSIRFVYGRS…LLKNWSYESV (401 aa)) form the UvrD-like helicase ATP-binding domain. 8–15 (GRSGTGKS) is a binding site for ATP. In terms of domain architecture, UvrD-like helicase C-terminal spans 279-582 (PYRFKGNLEL…NIGDIARIKG (304 aa)). 4 residues coordinate [4Fe-4S] cluster: Cys787, Cys1106, Cys1109, and Cys1115.

It belongs to the helicase family. AddB/RexB type 1 subfamily. As to quaternary structure, heterodimer of AddA and AddB. It depends on Mg(2+) as a cofactor. Requires [4Fe-4S] cluster as cofactor.

The heterodimer acts as both an ATP-dependent DNA helicase and an ATP-dependent, dual-direction single-stranded exonuclease. Recognizes the chi site generating a DNA molecule suitable for the initiation of homologous recombination. The AddB subunit has 5' -&gt; 3' nuclease activity but not helicase activity. This Clostridium beijerinckii (strain ATCC 51743 / NCIMB 8052) (Clostridium acetobutylicum) protein is ATP-dependent helicase/deoxyribonuclease subunit B.